A 255-amino-acid polypeptide reads, in one-letter code: 14-3-3 protein epsilon (255 aa).

The residue at position 1 (M1) is an N-acetylmethionine. K50 is modified (N6-acetyllysine; alternate). A Glycyl lysine isopeptide (Lys-Gly) (interchain with G-Cter in SUMO2); alternate cross-link involves residue K50. S65 carries the phosphoserine modification. N6-acetyllysine occurs at positions 69, 118, and 123. Y131 bears the Phosphotyrosine mark. T137 is modified (phosphothreonine). S210 is modified (phosphoserine). T232 carries the post-translational modification Phosphothreonine. Residues 234 to 255 are disordered; that stretch reads DMQGDGEEQNKEALQDVEDENQ.

The protein belongs to the 14-3-3 family. As to quaternary structure, homodimer. Heterodimerizes with YWHAZ. Interacts with PKA-phosphorylated AANAT. Interacts with ABL1 (phosphorylated form); the interaction retains it in the cytoplasm. Interacts with ARHGEF28. Interacts with BEX3. Weakly interacts with CDKN1B. Interacts with the 'Thr-369' phosphorylated form of DAPK2. Interacts with DENND1A. Interacts with GAB2. Interacts with phosphorylated GRB10. Interacts with KSR1. Interacts with NDEL1. Interacts with PI4KB, TBC1D22A and TBC1D22B. Interacts with the phosphorylated (by AKT1) form of SRPK2. Interacts with TIAM2. Interacts with the 'Ser-1134' and 'Ser-1161' phosphorylated form of SOS1. Interacts with ZFP36 (via phosphorylated form). Interacts with SLITRK1. Interacts with HSF1 (via phosphorylated form); this interaction promotes HSF1 sequestration in the cytoplasm in a ERK-dependent manner. Interacts with RIPOR2. Interacts with KLHL22; required for the nuclear localization of KLHL22 upon amino acid starvation. Interacts with CRTC1. Interacts with CRTC2 (probably when phosphorylated at 'Ser-171'). Interacts with CRTC3 (probably when phosphorylated at 'Ser-162' and/or 'Ser-273'). Interacts with ATP2B1 and ATP2B3; this interaction inhibits calcium-transporting ATPase activity. Interacts with MEFV. Interacts with RNF115. Interacts with GPR15; this interaction promotes ER-to-Golgi transport of GPR15.

It is found in the nucleus. It localises to the cytoplasm. The protein resides in the melanosome. In terms of biological role, adapter protein implicated in the regulation of a large spectrum of both general and specialized signaling pathways. Binds to a large number of partners, usually by recognition of a phosphoserine or phosphothreonine motif. Binding generally results in the modulation of the activity of the binding partner. Positively regulates phosphorylated protein HSF1 nuclear export to the cytoplasm. This chain is 14-3-3 protein epsilon (Ywhae), found in Rattus norvegicus (Rat).